The following is a 737-amino-acid chain: MAGLSFADSASLHEGRPLLLPSSFRESVTFKDVVVNFTQEEWKHLDPIQRDLFRDVTLENYTHLVSIGLQVSKPDMISQLEQGTEPWTEDSCIPVGPLEDWKKRAGNSVSSLELDISEEHLFSETVVTNSKRDDGSLEKLQANQQMLPREVQITEKTAPTCESNLSVSSSFITQTEVALDQPSTKTRAKQNSHPVKKEKLCKCNECGKAFTYCSALIRHQRTHTGEKPYKCNECNKAFSRSENLINHQRIHTGDKPYKCDQCGKGFIEGPSLTQHQRIHTGEKPYKCDECGKAFSQRTHLVQHQRIHTGEKPYTCTECGKSFSQRGHFMEHQKIHTGEKPFKCEECEKTFTRSTHLTQHQKIHTGEKTYKCNECGKAFNGPSTFIRHHMIHTGEKPYECNECGKAFSQHSNLTQHQKTHTGEKPYDCAECGKAFSYWSSLAQHLKIHTGEKPYKCSDCGKAFSYCSSLTQHRRIHTREKPFECSECGKAFSYLSNLNQHQKTHTQEKAYECKECGKAFIRSSSLAKHERIHTGEKPYQCHECGKTFSYGSSLIQHKKIHTGERPYKCNECGRAFNQKIHLTQHKRIHTGAKPYACPKCGKTFRHCSSLAQHQKTHTEEKPYQCNKCEKTFSQNSRLTQHQRIHTGEKPYKCSECDKCFTGSVHLTEHRSTHTGEKPYNSECPQTFSQSTYLTQHQKIHSGEKLLGCEDCEKAFQCHSALTKHQRLHPAVAAVGTSLT.

Residues 28 to 99 form the KRAB domain; sequence VTFKDVVVNF…DSCIPVGPLE (72 aa). Position 117 is a phosphoserine (S117). K185 is covalently cross-linked (Glycyl lysine isopeptide (Lys-Gly) (interchain with G-Cter in SUMO2)). C2H2-type zinc fingers lie at residues 201–223, 229–251, 257–279, 285–307, 313–335, 341–363, 369–391, 397–419, 425–447, 453–475, 481–503, 509–531, 537–559, 565–587, 593–615, 621–643, and 649–671; these read CKCNECGKAFTYCSALIRHQRTH, YKCNECNKAFSRSENLINHQRIH, YKCDQCGKGFIEGPSLTQHQRIH, YKCDECGKAFSQRTHLVQHQRIH, YTCTECGKSFSQRGHFMEHQKIH, FKCEECEKTFTRSTHLTQHQKIH, YKCNECGKAFNGPSTFIRHHMIH, YECNECGKAFSQHSNLTQHQKTH, YDCAECGKAFSYWSSLAQHLKIH, YKCSDCGKAFSYCSSLTQHRRIH, FECSECGKAFSYLSNLNQHQKTH, YECKECGKAFIRSSSLAKHERIH, YQCHECGKTFSYGSSLIQHKKIH, YKCNECGRAFNQKIHLTQHKRIH, YACPKCGKTFRHCSSLAQHQKTH, YQCNKCEKTFSQNSRLTQHQRIH, and YKCSECDKCFTGSVHLTEHRSTH. The segment at 677–698 adopts a C2H2-type 18; degenerate zinc-finger fold; the sequence is YNSECPQTFSQSTYLTQHQKIH. Residues 704-726 form a C2H2-type 19 zinc finger; it reads LGCEDCEKAFQCHSALTKHQRLH.

This sequence belongs to the krueppel C2H2-type zinc-finger protein family.

It is found in the nucleus. May be involved in transcriptional regulation. The chain is Zinc finger protein 184 (Zfp184) from Mus musculus (Mouse).